Consider the following 345-residue polypeptide: Meiotic recombination protein rec12 (345 aa).

Positions Asp5–Leu137 constitute a Topo IIA-type catalytic domain. Tyr98 serves as the catalytic O-(5'-phospho-DNA)-tyrosine intermediate. Glu179 and Asp229 together coordinate Mg(2+).

Belongs to the TOP6A family. As to quaternary structure, component of the DSB catalytic core (DSBC) complex, composed of at least rec12, rec6 and rec14. The complex interacts with mde2. The cofactor is Mg(2+).

The protein resides in the cytoplasm. It is found in the nucleus. The catalysed reaction is ATP-dependent breakage, passage and rejoining of double-stranded DNA.. Its function is as follows. Required for formation of the double-strand breaks (DSBs) that initiate meiotic recombination. Required for crossover recombination and chiasmatic segregation of chromosomes during meiosis I. Also involved in the faithful equational segregation of chromosomes during meiosis II. The protein is Meiotic recombination protein rec12 of Schizosaccharomyces pombe (strain 972 / ATCC 24843) (Fission yeast).